Consider the following 864-residue polypeptide: Leucine--tRNA ligase (864 aa).

The 'HIGH' region motif lies at Pro42–His52. Positions Lys624–Ser628 match the 'KMSKS' region motif. Lys627 provides a ligand contact to ATP.

It belongs to the class-I aminoacyl-tRNA synthetase family.

It is found in the cytoplasm. It carries out the reaction tRNA(Leu) + L-leucine + ATP = L-leucyl-tRNA(Leu) + AMP + diphosphate. The protein is Leucine--tRNA ligase of Burkholderia cenocepacia (strain ATCC BAA-245 / DSM 16553 / LMG 16656 / NCTC 13227 / J2315 / CF5610) (Burkholderia cepacia (strain J2315)).